The primary structure comprises 628 residues: Putative ankyrin repeat protein L769 (628 aa).

ANK repeat units lie at residues 217 to 246 (NYMDILKQACFFGSTEIINYVLNKGIEYDF), 333 to 362 (DLDEIMIEALRYNFTELIDWCINNGSDINR), 421 to 451 (TAENIIHNIIENRPHIQVLKYLLSEITNHDL), and 512 to 542 (NNLKILFVTMMSNNIDMLEFLLEINNYDQDY).

This Acanthamoeba polyphaga mimivirus (APMV) protein is Putative ankyrin repeat protein L769.